A 511-amino-acid chain; its full sequence is 2-isopropylmalate synthase (511 aa).

One can recognise a Pyruvate carboxyltransferase domain in the interval 5–267; the sequence is LFIFDTTLRD…DTRIDATQIV (263 aa). Mn(2+) contacts are provided by D14, H202, H204, and N238. The segment at 393–511 is regulatory domain; it reads KLLSMKVCSE…SKRERAHPQV (119 aa).

This sequence belongs to the alpha-IPM synthase/homocitrate synthase family. LeuA type 1 subfamily. Homodimer. The cofactor is Mn(2+).

The protein resides in the cytoplasm. The catalysed reaction is 3-methyl-2-oxobutanoate + acetyl-CoA + H2O = (2S)-2-isopropylmalate + CoA + H(+). It participates in amino-acid biosynthesis; L-leucine biosynthesis; L-leucine from 3-methyl-2-oxobutanoate: step 1/4. Its function is as follows. Catalyzes the condensation of the acetyl group of acetyl-CoA with 3-methyl-2-oxobutanoate (2-ketoisovalerate) to form 3-carboxy-3-hydroxy-4-methylpentanoate (2-isopropylmalate). This chain is 2-isopropylmalate synthase, found in Thiobacillus denitrificans (strain ATCC 25259 / T1).